A 266-amino-acid chain; its full sequence is Methionine aminopeptidase 1 (266 aa).

H88 lines the substrate pocket. Residues D106, D117, and H186 each contribute to the a divalent metal cation site. H193 serves as a coordination point for substrate. 2 residues coordinate a divalent metal cation: E219 and E250.

It belongs to the peptidase M24A family. Methionine aminopeptidase type 1 subfamily. As to quaternary structure, monomer. Requires Co(2+) as cofactor. It depends on Zn(2+) as a cofactor. Mn(2+) serves as cofactor. The cofactor is Fe(2+).

The enzyme catalyses Release of N-terminal amino acids, preferentially methionine, from peptides and arylamides.. Its function is as follows. Removes the N-terminal methionine from nascent proteins. The N-terminal methionine is often cleaved when the second residue in the primary sequence is small and uncharged (Met-Ala-, Cys, Gly, Pro, Ser, Thr, or Val). Requires deformylation of the N(alpha)-formylated initiator methionine before it can be hydrolyzed. The sequence is that of Methionine aminopeptidase 1 from Mycobacterium tuberculosis (strain CDC 1551 / Oshkosh).